Reading from the N-terminus, the 149-residue chain is uncharacterized protein (149 aa).

To B.subtilis XkdN.

This is an uncharacterized protein from Bacillus subtilis (strain 168).